The sequence spans 543 residues: Ipecoside beta-D-glucosidase IpeGLU1 (543 aa).

A beta-D-glucoside contacts are provided by residues Gln-36, His-140, 185 to 186 (NE), Tyr-350, Glu-422, Trp-471, and Phe-487. Glu-186 functions as the Proton donor in the catalytic mechanism. Residue Glu-422 is the Nucleophile of the active site.

This sequence belongs to the glycosyl hydrolase 1 family. In terms of tissue distribution, expressed in roots.

It localises to the cytoplasm. Its subcellular location is the cytosol. The enzyme catalyses deacetylipecoside + H2O = deacetylipecoside aglycone + D-glucose. The catalysed reaction is deacetylisoipecoside + H2O = deacetylisoipecoside aglycone + D-glucose. It catalyses the reaction 6-O-methyldeacetylipecoside + H2O = 6-O-methyldeacetylipecoside aglycone + D-glucose. It carries out the reaction 6-O-methyldeacetylisoipecoside + H2O = 6-O-methyldeacetylisoipecoside aglycone + D-glucose. The enzyme catalyses ipecoside + H2O = ipecoside aglycone + D-glucose. The catalysed reaction is 3alpha(S)-strictosidine + H2O = strictosidine aglycone + D-glucose. It participates in alkaloid biosynthesis. Its activity is regulated as follows. Inhibited by Cu(2+), Fe(2+) and Zn(2+). Beta-glucosidase involved in the biosynthesis of ipecac and benzylisoquinoline monoterpenoid-isoquinoline alkaloids natural products, starting by the condensation of dopamine and secologanin, and including emetine and cephaeline, drugs used both as anti-protozoal (e.g. treatment of ameobiasis) and as emetic agents. In response to pathogen and herbivore attack, triggers the release of toxic ipecoside aglycon to trigger defense responses. Catalyzes deglucosylation both on (1S)-diastereomer and (1R)-diastereomer substrates, including ipecoside, the main alkaloidal glucoside. Also active on N-deacetylisoipecoside, 6-O-methyl-N-deacetylisoipecoside, 6-O-methyl-N-deacetylipecoside and N-deacetylipecoside. In Carapichea ipecacuanha (Ipecac), this protein is Ipecoside beta-D-glucosidase IpeGLU1.